The chain runs to 130 residues: Small ribosomal subunit protein uS9 (130 aa).

It belongs to the universal ribosomal protein uS9 family.

This Lawsonia intracellularis (strain PHE/MN1-00) protein is Small ribosomal subunit protein uS9.